The following is a 375-amino-acid chain: Arsenite methyltransferase (375 aa).

Residue Ser-335 is modified to Phosphoserine.

Belongs to the methyltransferase superfamily. Arsenite methyltransferase family.

Its subcellular location is the cytoplasm. The protein resides in the cytosol. The enzyme catalyses arsenic triglutathione + [thioredoxin]-dithiol + S-adenosyl-L-methionine + 2 H2O = methylarsonous acid + [thioredoxin]-disulfide + 3 glutathione + S-adenosyl-L-homocysteine + H(+). The catalysed reaction is arsenic triglutathione + 2 [thioredoxin]-dithiol + 2 S-adenosyl-L-methionine + H2O = dimethylarsinous acid + 2 [thioredoxin]-disulfide + 3 glutathione + 2 S-adenosyl-L-homocysteine + 2 H(+). It catalyses the reaction arsenic triglutathione + 3 [thioredoxin]-dithiol + 3 S-adenosyl-L-methionine = trimethylarsine + 3 [thioredoxin]-disulfide + 3 glutathione + 3 S-adenosyl-L-homocysteine + 3 H(+). Functionally, catalyzes the transfer of a methyl group from AdoMet to trivalent arsenicals producing methylated and dimethylated arsenicals. It methylates arsenite to form methylarsonate, Me-AsO(3)H(2), which is reduced by methylarsonate reductase to methylarsonite, Me-As(OH)2. Methylarsonite is also a substrate and it is converted into the much less toxic compound dimethylarsinate (cacodylate), Me(2)As(O)-OH. This chain is Arsenite methyltransferase (AS3MT), found in Homo sapiens (Human).